Reading from the N-terminus, the 471-residue chain is MGIRIYNDLTRKKEDFVPLEPGKVRFYNCGPTVYDYFHIGNARNFVVFDTVRRYLEYRGYQVTFVQNFTDIDDRMIKRARERGITVSELAEEMIQAYFADAGALGVRPADVHPRATALIDEQIAMIQQLIDKGHAYVVEGGDVYFRVTTSPDYGKLSHKNLEELVAGASERVDPDDRKEHPFDFALWKGQKPGEPAWPAPWGPGRPGWHIECSAMARKYLGDTIDIHAGGEDLTFPHHENEIAQSEAVTGKPFARYWMHNAHLMIDGAKMSKSVGNFFTVRDILKRYDGEVVRMFLLSAHYRTQLSFSDQLMEDTRRALERLYNTVANLEHLAKTAPRAEMTAEEQAVLAELSQARERFVAAMDDDFNTAEGLAVIFDLSRELNSRVKPGASAAFAEGGLALLRELAGVLGLLERKAQPQELDAEIEALIAARQEARKARNFAEADRIRDQLRAMGIILEDTPQGVRWRRA.

C29 is a Zn(2+) binding site. The short motif at 31–41 is the 'HIGH' region element; it reads PTVYDYFHIGN. Zn(2+) contacts are provided by C212, H237, and E241. The 'KMSKS' region signature appears at 269–273; it reads KMSKS. An ATP-binding site is contributed by K272.

The protein belongs to the class-I aminoacyl-tRNA synthetase family. In terms of assembly, monomer. Zn(2+) serves as cofactor.

The protein resides in the cytoplasm. The enzyme catalyses tRNA(Cys) + L-cysteine + ATP = L-cysteinyl-tRNA(Cys) + AMP + diphosphate. The polypeptide is Cysteine--tRNA ligase (Symbiobacterium thermophilum (strain DSM 24528 / JCM 14929 / IAM 14863 / T)).